Consider the following 613-residue polypeptide: Putative two-component response regulator ARR21 (613 aa).

One can recognise a Response regulatory domain in the interval 17 to 131; the sequence is NVMVVDDDHV…DLTKIYQFAL (115 aa). 4-aspartylphosphate is present on Asp68. Residues 178–195 are compositionally biased toward polar residues; it reads KSDSRTVNSTNGSCVSTD. Residues 178–223 form a disordered region; the sequence is KSDSRTVNSTNGSCVSTDGSRKNRKRKPNGGPSDDGESMSQPAKKK. The Nuclear localization signal motif lies at 221 to 224; it reads KKKK. A DNA-binding region (myb-like GARP) is located at residues 224–274; the sequence is KIQWTDSLHDLFLQAIRHIGLDKAVPKKILAFMSVPYLTRENVASHLQKYR.

The protein belongs to the ARR family. Type-B subfamily. As to quaternary structure, binds the target DNA as a monomer. Post-translationally, two-component system major event consists of a His-to-Asp phosphorelay between a sensor histidine kinase (HK) and a response regulator (RR). In plants, the His-to-Asp phosphorelay involves an additional intermediate named Histidine-containing phosphotransfer protein (HPt). This multistep phosphorelay consists of a His-Asp-His-Asp sequential transfer of a phosphate group between first a His and an Asp of the HK protein, followed by the transfer to a conserved His of the HPt protein and finally the transfer to an Asp in the receiver domain of the RR protein. Mainly expressed in siliques. Also found in germinating seedlings, stems, flowers and roots, but not in rosette leaves.

It is found in the nucleus. Putative transcriptional activator that binds specifically to the DNA sequence 5'-[AG]GATT-3'. Functions as a response regulator involved in His-to-Asp phosphorelay signal transduction system. Phosphorylation of the Asp residue in the receiver domain activates the ability of the protein to promote the transcription of target genes. Could directly activate some type-A response regulators in response to cytokinins. This is Putative two-component response regulator ARR21 (ARR21) from Arabidopsis thaliana (Mouse-ear cress).